The chain runs to 475 residues: Ribulose bisphosphate carboxylase large chain (475 aa).

Positions M1–S2 are excised as a propeptide. An N-acetylproline modification is found at P3. K14 bears the N6,N6,N6-trimethyllysine mark. The substrate site is built by N123 and T173. Residue K175 is the Proton acceptor of the active site. K177 contacts substrate. Mg(2+)-binding residues include K201, D203, and E204. An N6-carboxylysine modification is found at K201. H294 acts as the Proton acceptor in catalysis. The substrate site is built by R295, H327, and S379.

This sequence belongs to the RuBisCO large chain family. Type I subfamily. As to quaternary structure, heterohexadecamer of 8 large chains and 8 small chains; disulfide-linked. The disulfide link is formed within the large subunit homodimers. Requires Mg(2+) as cofactor. Post-translationally, the disulfide bond which can form in the large chain dimeric partners within the hexadecamer appears to be associated with oxidative stress and protein turnover.

It is found in the plastid. Its subcellular location is the chloroplast. It carries out the reaction 2 (2R)-3-phosphoglycerate + 2 H(+) = D-ribulose 1,5-bisphosphate + CO2 + H2O. The catalysed reaction is D-ribulose 1,5-bisphosphate + O2 = 2-phosphoglycolate + (2R)-3-phosphoglycerate + 2 H(+). Functionally, ruBisCO catalyzes two reactions: the carboxylation of D-ribulose 1,5-bisphosphate, the primary event in carbon dioxide fixation, as well as the oxidative fragmentation of the pentose substrate in the photorespiration process. Both reactions occur simultaneously and in competition at the same active site. This chain is Ribulose bisphosphate carboxylase large chain, found in Spirogyra maxima (Green alga).